We begin with the raw amino-acid sequence, 207 residues long: Probable GTP-binding protein EngB (207 aa).

The EngB-type G domain occupies 22-193 (RVPEIVFAGR…LAHFDHYLSG (172 aa)). GTP-binding positions include 30-37 (GRSNVGKS), 57-61 (GKTRL), 75-78 (DIPG), 142-145 (TKDD), and 172-174 (YSS). S37 and T59 together coordinate Mg(2+).

The protein belongs to the TRAFAC class TrmE-Era-EngA-EngB-Septin-like GTPase superfamily. EngB GTPase family. Requires Mg(2+) as cofactor.

In terms of biological role, necessary for normal cell division and for the maintenance of normal septation. This chain is Probable GTP-binding protein EngB, found in Chlorobium luteolum (strain DSM 273 / BCRC 81028 / 2530) (Pelodictyon luteolum).